A 40-amino-acid chain; its full sequence is IFGGTFAKNGEYPWMVVIDLPEFACGGVLISKKFVLTAAH.

In terms of domain architecture, Peptidase S1 spans 1–40 (IFGGTFAKNGEYPWMVVIDLPEFACGGVLISKKFVLTAAH). The Charge relay system role is filled by His-40.

Belongs to the peptidase S1 family. Expressed by the venom gland.

It localises to the secreted. Functionally, binds in a dose-dependent manner to the breast cancer cell line MCF-7. This chain is Serine proteinase-like BMK-CBP, found in Olivierus martensii (Manchurian scorpion).